The chain runs to 307 residues: Synaptophysin (307 aa).

Over 1–19 (MDVVNQLVAGGQFRVVKEP) the chain is Cytoplasmic. An MARVEL domain is found at 15 to 222 (VVKEPLGFVK…NLWFVFKETG (208 aa)). A helical membrane pass occupies residues 20–43 (LGFVKVLQWVFAIFAFATCGSYTG). Residues 44 to 101 (ELRLSVECANKTESALNIEVEFEYPFRLHQVYFDAPSCVKGGTTKIFLVGDYSSSAEF) lie on the Vesicular side of the membrane. An N-linked (GlcNAc...) asparagine glycan is attached at Asn-53. Tyr-75 is modified (phosphotyrosine). A helical membrane pass occupies residues 102–125 (FVTVAVFAFLYSMGALATYIFLQN). The Cytoplasmic portion of the chain corresponds to 126-132 (KYRENNK). Residues 133–156 (GPMMDFLATAVFAFMWLVSSSAWA) form a helical membrane-spanning segment. Residues 157-194 (KGLSDVKMATDPENIIKEMPMCRQTGNTCKELRDPVTS) lie on the Vesicular side of the membrane. Residues 195–218 (GLNTSVVFGFLNLVLWVGNLWFVF) form a helical membrane-spanning segment. Topologically, residues 219–307 (KETGWAAPFM…GAPTSFSNQM (89 aa)) are cytoplasmic. The residue at position 221 (Thr-221) is a Phosphothreonine. The disordered stretch occupies residues 233 to 307 (GAPEKQPAPG…GAPTSFSNQM (75 aa)). Over residues 248–258 (AGYGQGPGGYG) the composition is skewed to gly residues. The segment at 249–298 (GYGQGPGGYGPQDSYGPQGGYQPDYGQPASGGGGYGPQGDYGQQGYGQQG) is repeats, Gly-rich. Over residues 259–276 (PQDSYGPQGGYQPDYGQP) the composition is skewed to low complexity. Phosphotyrosine is present on residues Tyr-273 and Tyr-289. Gly residues predominate over residues 277–296 (ASGGGGYGPQGDYGQQGYGQ).

The protein belongs to the synaptophysin/synaptobrevin family. Homohexamer or homotetramer. Interacts with SRCIN1. Interacts with VAMP2; the interaction is inhibited by interaction of VAPM2 with SEPT8. In terms of processing, ubiquitinated; mediated by SIAH1 or SIAH2 and leading to its subsequent proteasomal degradation. Phosphorylated by SRC. As to expression, expressed in the brain with expression in the cerebrum and the cerebellum.

It is found in the cytoplasmic vesicle. Its subcellular location is the secretory vesicle. It localises to the synaptic vesicle membrane. The protein localises to the synapse. The protein resides in the synaptosome. Possibly involved in structural functions as organizing other membrane components or in targeting the vesicles to the plasma membrane. Involved in the regulation of short-term and long-term synaptic plasticity. The protein is Synaptophysin (Syp) of Rattus norvegicus (Rat).